The sequence spans 6359 residues: MKTKVEKIYPLSNMQKGMLFHAMKDEASHAYFEQFIIELKGDVDERMFEESLNEVMKRHEILRASFHHRLDEPLHVIIKDRHMKFDYLDIRGRHDQDGVLERYLAEDRQKGFDLAKDTLMRACLIRMSDDSYQFVWTYHHILLDGWCLGIILDELLTIYEMKRKGQNHQLEDPRPYSDYIKWLEDQDKEEAQSYWESYLSGYDQKNSLPKLRTPSETGFKRREKTIECSKELTNRLIKLANRNHVTINTVLQSIWGVILAKYNNSEDVVFGTVVSGRDAEVEGIETMVGVFINTIPTRIRLDKDKLFKDVLRQTQADALESSRYNYMNLAEVQALSELKNDLIDHVMVFENYAVDQKAFEEKNDVGFEMVNVSGEEQTNYHFSISAALDDQLKLLFIYDENVYDTTIIETLEKHIITVAEQVAEDETQTLRDINLVSKEEQHRILDTFNDTKTGYPKDKPLHELFEEQAMKTPDHTALVFGAQRMTYRELNEKANQTARLLREKGIGRGSIAAIIADRSFEMIIGIIGILKAGGAYLPIDPETPKHRIAFMLSDTKAGVLLAQGKAADGIDCEADIIHLDKGVADGFSKKRLSSVNDSGDTAYIIYTSGSTGMPKGVVTPHYSAARVVKNTNYIDITEDDAILQLSNYSFDGSVFDIFGALLNGASLVLIEKETVLNTHELAEVIKKEQVSVMFITTALFNTLADINIGCLAKLRKIFLGGERASIPHVRKVLNHVGRDKLIHVYGPTESTVYATYYFINEIDDEAETIPIGSPLANTSVLIMDEAGKLLPIGVPGELCIAGDGLSKGYLNREELTAEKFIPHPFIPGERLYKTGDLAKWLPDGNIEFIGRIDHQVKIRGFRIELGEIESRLEMHEDINETIVTVREDEESRPYICAYITANREISLDELKGFLGEKLPEYMIPAYFVKMDKLPLTKNGKVDRKALPEPDRTAGAENEYEAPRNETEEKLAAIWRDILKVEKSGINDHFFEMGGHSLKAAAMAARIRKELKAEIPLGQIFKTPTIKGLGEYIRSTKDSVYSSIQKVEEKEYYRLSSAQKRLYILDQIEGSGLSYNIPFTMKVKGRFDIRRFENALKTIIQRHEALRTSFLMADGEPVQKIEKEVDFSIKCSKIQSLSIQEIIKQFVRPFDLKKAPLFRTEVVKVDDEEHIILFDMHHIISDGASMGVLTKEICDLYGGKELKPLSLQYKDYSEWQRDFYQKDEMKRQKEYWLNIFKGEIPVLNMPTDYPRPQMHSVEGDRIGFAIDGELTKKLKRIAKDNGATMYMLLLAAYTVLLRTYSGQEDVIIGTPIQGRKHHELKHVIGMFVNTLAMRNHPKGDKTFAEYLQDVKETALKAYENQDYQFDDLVEQLDLERDMSRNPLFDTMFVLQNLEKADAEIEGLTFEPFESDIHISKFDLTLSAIEKDSKIEFDLEYCTKLFKRETVERMAAHFVRVLEDISKRTDKRLDQIEAMSEDEKNTLLYRFNDTKTDAPTDKTICQLFAERAETSPDKTAVVFEDQTLTYRQLHERSNQLARFLREKGVQPDTAVGIMVDRSPEMIIGLLGILKAGGAYLPLDPAYPEDRIKYILGDSQTKFLLSEEALIKKRAFIKEADMINIDIHDKQIAAQDAAQLEPVSRSGDLAYIIYTSGSTGKPKGVLIEQKGLSNLVSAVVKLMHLNTGSRVIQFASLSFDASAFEIFPALAAGSALVLGRQEEMMPGQPLTSFLRQYNITHATLPPTVLDVLNESGLENLKVIVSAGSACSEELAKRWSGNRLFINAYGPTETTVCATAGIYEGSGRPHIGSPIANTNVYVLDQNQKPVPTGVVGELCVGGMSLARGYLNRPELTAEKFISHPFASGERLYRTGDLARWLPDGHLEFLGRIDHQVKIRGYRIELGEIENQLLKLDKIDEAAVIARKDDDHSDYLCAYIVSKEDWTSTEISEWLEKELPHYMIPAYFVRLDKLPLTSNDKVDRKALPAPDRHVATGAVYEAPRNDTEAKLVDIWRDVLGAGDIGISHHFFAAGGDSIKALQIVSRLSRLGLKLEMKDLFANPRIKDLAKYVKKQSQRKNANTIVTGHAELTPIQKWYFANNKEELDHFNQSFVLFRKGGFDESCVKKAFNKIMEQHDALRMIYEEKGGDFIQYNRSFREDLFDLDVYDVRGLDRQAEKVYELATSIQKLSSIRKGKLVHLGIFRADEGDHLLIVIHHLVVDGVSWRILFEDFETLYSQALKGQTLEIGYKTDSYQEFARRLKAYAHSRTLSKEAEYWRNIAKARVRFIPPKNVLKEDVYENSTTLSIKLGKEATADLLRNTNRAYNTEINDILLTALLTGARDITGENKLKVMMEGHGREDILEGVDITRTIGWFTTMYPVLLDAGEEKALSQQIKMVKETLRKIPNKGIGYGLLKYMAEDPDFTNEEKARISFNYLGDIDADMNRGEFSGSSFSEGESIGGKIARSHSIEINAIVMNHELVIHTTFNQMEYEKDTISRLNHQLKERLEQIIKHCTQQTESERTPSDYGDTNISLAELEEIKGKYRSAIEKIYPLANMQKGMLFHAIEDHTSDAYFQQTVMDIEGYVDPAILEASFNDIMKRHEILRASYEYEIVEEPRQIIIENRSIDFTYFNIAKSSAQQQEMFIERLLNEDRKKGFDLSKDVLMRAYLLKTAERSYRLVWSHHHILLDGWCLGIIMRELFVIYENRMNGKASPLKETKPYSDYIKWLERQDQEEARQYWREYLKGYEEQAQLPTLTKRKKSSRYDRREKVIHLSKQLTKQLKELAAKNSVTLHTVIQTIWGLMLTRYTKIDDVVFGTVVSGREANVDGIEDMIGLFINTIPTRIRFNEQARFNDCLQKVQEDAIQSNRYNYMNLAEVQALSSLKKDLIDHILVFENYEADEQDFEESQMKTGFKVNEISAAEQSITAFSMSVTPGEELTLVLTYDGNVYDRDIINNIEGHIKRVAEQVTANENRKIAEIDMLAEEERKTLLYEFNRTNADYPRNKTIHQLFEEQAERTPGHTAVVFEKEELSYKALNERSNQLAGLLREKGVKPDMIVGVMAERSVEMIVGMLAVLKAGGAYLPIDPEYPEDRIRYMIEDSGISILLKKADKQIDVDFTCIDMNEKGLAKDMAAENLGHTSGSSDMAYVIYTSGSTGKPKGVMVNHQSIVNTLYWRKQSYGYSTADATLQVPSFSFDSSVEDIFTTLISGAKLVLIRDLRMNPREIIGVLRTHKATNLLAVPSFYLNLLDTIEQPLDDLRFVTVAGEGFNESLIRQHFEKLPNVKLFNEYGPTENSVCSTRGELRKDDEKVVIGRPISNHKVYILNHNQQLLPLGTPGELCLSGEGLARGYLNRPDLTLEKFVPNPFAPGESMYRTGDLARFLPDGQIEYLGRIDHQVKIRGFRIELGEIENQLLKIEGIDAAAVMAREDQAGGKYLCAYIVADKAAGVADVRKCLLKELPDYMVPSYFVKLDQLPLTANGKIDRKALPEPSSTISEATYEAPRNRTEEKLVSIWEDVLGIENIGISHNFFELGGHSLKAAALTAKLHKEMKIEVPLRQLFETPTIKDIGDFIESMKESPYASITQAEEKEYYALSSAQRRLYILNQIEPGGLSYNMPFAMKIAGDFDVDRFEDAFRQLIERHEALRTAFVMVDGEPVQKIEKEVDFKVKYGRLGQDPLEEKIKAFIKPFALEKAPLLRAEVLKASGDEHVLMLDMHHIISDGVSMAIFTRELAELYEGKTLPPLTIQYKDFSEWQKLFYQKDEVKRQEDYWLNVFQGEVPVLNLPADEKRPQKRSIEGDIVQFEIDGETSAMLNKLAKENGATMYMLLLAGYTTLLAKYTGQEDIVVGSPIAGRHHSDLKHVIGLFINTLAMRNHPKGDMPFADYLKEVKETALKAYENQDYPFDELVEKLDVKRDMSRHPLFDTMLVLQNFDGDEADIDGLTFQPLQTEVNISKFDLTLTAAETNEGIQCVFNYSTKLFKRSTIERMAGHLINILKEAANDPHMPLSDVNMLSDEEMNALLDQNQGKQADYPQDQTVHQLFEQQADKTPEQTAVVYADEKLTYRELNERANQLARLLRDKGADADQPVAIMIEPSLEMIISMLAVLKAGAAYVPIEPEQLAKRTNEILSDSRAAILLVKGSVKENVAFAGEIVNVADGLIDAKVASNLSASGSADQNAYIIYTSGSTGKPKGVFVRHGNVVNYTTWFMKEAGLTENDKAMLVSSYAFDLGYTSIFSALLSGSELHIARKECYTNAHRALKYIKENGITYIKLTPSLFNIFVNDPGFSAEKPCATLRLVVLGGEMINTRDVETFYNQYPDHVVMNHYGPTETTIGSVFKVIDPEHLDSFKECPVIGTPIHNTNAYVLDENMKLLPEGVYGELCIAGAGVTGGYVNRPDETKEKFIENPFAPHTKMYRTGDLARRLSDGNIELAGRIDTQVKVRGYRIEPEEIKNRLLAHDDIKEAFIAAREDHKGAKQLCAYFTADAELPFEDIRTYLMHELPEYMIPSSFVQIEKMPLSANGKIDTAALPEPQPGKETEYEPPRNETEEKLVQIWEEVLGIDKIGITHHFFAAGGDSIKALQMISRLSREGLSLEMKDLFANPQIKSLSRYVKAESDKSASYETVEGEVLLTPIQQEYFSLNKTDRNHYNHAVMLYRKNGFDESIVKRVFKEIIKHHDALRTVFTEEDGKIIQYNRGPDKQLFDLFVYDVSSENDQPQKVYQLATELQQSIDIETGPLVKLAVFKTNNGDHLLIIIHHLVVDGISWRILFEDLAIGYSQLANGEKVEFYPKTASYQAYARHIAEYAKSVKLLSEKQYWLKAIAEGVEFLDMNENAGAFKVEDSRTFSTELEKEETKRLLRETNRAYHTEINDILITALLVAARDMNGQNQLRITLEGHGREQVADGIDISRTVGWFTSKYPVFIDLGQETDMSRTIKMVKEHLRNVPNKGIGYGILKYLTRDSEIAKGAASPILFNYLGQLDEDINSGEFSSSHLSPGEAAGKGITREHPLEINAVVFRGKLAIQTTYNTRAYSEDVVRAFAQNYKEALKAVIRHCAEREETEKTPSDYGDKGISLDQLEEIKLKYKGMEIEKIYPLANMQRGMLFHALEDKESQAYFEQMAINMKGLIDERLFAETFNDIMERHEILRASIEYEITDEPRNVIIKDRKINLDYHDLRKQSPAEREQVIQAYRKADREKGFRLNSEPLIRAALMRTEDDSYTFIWTNHHILLDGWSRGIIMGELFHMYHMKEARQKHRLEEARPYSDYIGWLQQQDKEAAKAYWRNYLSGFTEKSPISVLAGSSGHAKYKRKEAVIEFPEQLTGRITELASRNNVTFHTVLQCIWGMLLARYNQTDDVVFGTVISGRDAQVTGIEKMVGLFINTVPTRIRLDKSQSFKELIKSVQEQALEGRTYHDMNLSEVQSLSELKRELLDHILIFENYAVDQSAFETSGKRGAGFVFEEIHAEEQTNYGFNIVAVPGERLVIKLTYDGNIYHDHIIAGIKGHLQQVMEQVVQHEDQSLNDITVLSEAERNRLLYEWNDTKAEYPNQTIHRLFEEQAEKTPELAAVVSGNDKLTYRELNEKSNQLARYLRDKGVKADTIVAIMAERSPEMVVGIMGILKAGGAYLPIDPDYPEERIKYMLEDSGAAIILADHKQDLGTLHQEAVELTGDFSSYPADNLEPAGNADSLAYIIYTSGSTGKPKGVMIRQRGLVNYITWADRVYVQGEQLDFALYSSIAFDLTVTSIFTPLISGNRVIVYRHSEDGEPLIRKVFRDQKAGIVKLTPSHLSLVKDMDASGSSIKRLIVGGEDLKTELAKEITERFHHNIEIYNEYGPTETVVGCMIYQYDAGWDRQVSVPIGKPASNVQLYILDERQEVQPVGIAGELYISGDGVAKGYLNKPELTSEKFLPNPFLPGERMYRTGDLAKMRPDGHIEYLGRIDHQVKIRGYRIELGEIEHQLLRHSDIKEAAVAAKTDQNNDQVLCAYVVSERDITQKDIKTFLAKELPEYMVPSYLLKLDELPLTPNGKVDLKALPEPDRSAGALLEYEPPRHELEEKMAAIWEDILNIEQIGINANIFDIGANSLNVMSFVSRLYAELGFRVPFKDIFSKPTIKELSDFLKHAQDLLKDYTDDCMQLTRAEEGGKNLFCFPPAASMGIAYMGLAKHLKQHSVYSFNFIPSANRIRKYADIIKNIQGEGPYTLIGYSSGGILAFDVAKELNRQGYEVEDLIIIDSKYRTKAEKHQFTEEEYREEISKTFELEKYRDVEKLLSDYLVDLVMKSYVYIQNTVTTGAIDGHISYIKSSDNQRGENMMMWEKATSKTFTVVQGAGTHMQMISKSHPDILERNARLIHDIINKTVKI.

Residues leucine 461–serine 1034 are domain 1 (isoleucine-activating). Over residues valine 941–alanine 953 the composition is skewed to basic and acidic residues. The tract at residues valine 941 to proline 962 is disordered. Carrier domains lie at alanine 961–lysine 1036, alanine 1993–serine 2067, alanine 3497–lysine 3572, proline 4539–serine 4613, and proline 6047–glutamine 6122. Serine 996, serine 2028, and serine 3532 each carry O-(pantetheine 4'-phosphoryl)serine. The tract at residues phenylalanine 1517–lysine 2064 is domain 2 (D-phenylalanine-activating). Positions asparagine 2999 to serine 3570 are domain 3 (histidine-activating). The domain 4 (D-aspartic acid-activating) stretch occupies residues glutamate 4047 to glutamate 4612. Residues isoleucine 4521–threonine 4544 form a disordered region. Positions proline 4531–threonine 4544 are enriched in basic and acidic residues. O-(pantetheine 4'-phosphoryl)serine is present on residues serine 4574 and serine 6082. The domain 5 (asparagine-activating) stretch occupies residues isoleucine 5549–threonine 6129.

It belongs to the ATP-dependent AMP-binding enzyme family. Large multienzyme complex of BA1, BA2 and BA3. Pantetheine 4'-phosphate serves as cofactor.

It catalyses the reaction L-aspartate = D-aspartate. It carries out the reaction L-phenylalanine + ATP + H2O = D-phenylalanine + AMP + diphosphate + H(+). The protein operates within antibiotic biosynthesis; bacitracin biosynthesis. In terms of biological role, induces peptide synthesis, activates and incorporates five amino acids, forms a thiazoline ring between the first two amino acids and incorporates a D-glutamine in the fourth position. The protein is Bacitracin synthase 3 (bacC) of Bacillus licheniformis.